Consider the following 133-residue polypeptide: ATP synthase epsilon chain (133 aa).

This sequence belongs to the ATPase epsilon chain family. F-type ATPases have 2 components, CF(1) - the catalytic core - and CF(0) - the membrane proton channel. CF(1) has five subunits: alpha(3), beta(3), gamma(1), delta(1), epsilon(1). CF(0) has three main subunits: a, b and c.

Its subcellular location is the cell membrane. Produces ATP from ADP in the presence of a proton gradient across the membrane. This Mycoplasma genitalium (strain ATCC 33530 / DSM 19775 / NCTC 10195 / G37) (Mycoplasmoides genitalium) protein is ATP synthase epsilon chain (atpC).